A 254-amino-acid chain; its full sequence is Membrane protein US20 (254 aa).

A run of 7 helical transmembrane segments spans residues 31–51 (AIFIFQLAFSFGLGSVFWLGF), 62–82 (YSFFLTVLVPIVCMFITYTLG), 89–109 (ATVLFIYLLANSLTAAIFQMC), 114–134 (VLVGSYVMTLALFISFTGLAF), 143–163 (WKCISCVYVVMLLSFLTLALL), 178–198 (AFSISFFLGILAYDSLMVIFF), and 208–228 (AVCLYLDSMAIFLTLLLMLSG).

Its subcellular location is the host membrane. In Homo sapiens (Human), this protein is Membrane protein US20 (US20).